The chain runs to 122 residues: Fluoride-specific ion channel FluC 2 (122 aa).

4 consecutive transmembrane segments (helical) span residues 3–23 (ITAISLVLFGSTFGLIFRMFI), 38–58 (TSIVNFIASFFLGILLALNLT), 62–82 (LLLLFYIGFLGCFSTFSSFIY), and 93–113 (FMHLFFHYFEVIIISFICFYL). The Na(+) site is built by G72 and S75.

The protein belongs to the fluoride channel Fluc/FEX (TC 1.A.43) family.

It is found in the cell inner membrane. It carries out the reaction fluoride(in) = fluoride(out). Its activity is regulated as follows. Na(+) is not transported, but it plays an essential structural role and its presence is essential for fluoride channel function. Functionally, fluoride-specific ion channel. Important for reducing fluoride concentration in the cell, thus reducing its toxicity. In Prochlorococcus marinus (strain MIT 9312), this protein is Fluoride-specific ion channel FluC 2.